A 1027-amino-acid polypeptide reads, in one-letter code: Transient-receptor-potential-like protein (1027 aa).

Residues methionine 1–arginine 22 form a disordered region. ANK repeat units lie at residues methionine 85 to asparagine 115, leucine 117 to glutamate 141, and serine 163 to lysine 192. 6 consecutive transmembrane segments (helical) span residues phenylalanine 355–methionine 375, phenylalanine 391–glutamate 411, phenylalanine 473–phenylalanine 493, valine 516–phenylalanine 536, phenylalanine 559–tryptophan 579, and methionine 640–methionine 660. 2 disordered regions span residues lysine 825 to serine 929 and glutamate 1008 to lysine 1027. The segment covering glutamate 855–aspartate 874 has biased composition (acidic residues). The span at arginine 910–leucine 923 shows a compositional bias: basic and acidic residues. Residues glutamate 1008–serine 1017 are compositionally biased toward polar residues.

It belongs to the transient receptor (TC 1.A.4) family. STrpC subfamily.

Its subcellular location is the membrane. Could mediate calcium entry and form a calcium permeant channel. The chain is Transient-receptor-potential-like protein (trp-1) from Caenorhabditis elegans.